Reading from the N-terminus, the 428-residue chain is Probable G-protein coupled receptor (428 aa).

The Extracellular segment spans residues 1 to 46 (MMADKTSPMITSDHSISNFSTGLFGPHPTVPPDVGVVTSSQSQMKD). N-linked (GlcNAc...) asparagine glycosylation is present at N18. Residues 47–67 (LFGLFCMVTLNLIALLANTGV) traverse the membrane as a helical segment. The Cytoplasmic segment spans residues 68-93 (MVAIARAPHLKKFAFVCHLCAVDVLC). A helical membrane pass occupies residues 94-114 (AILLMPLGIISSSPFFGTVVF). At 115–120 (TILECQ) the chain is on the extracellular side. A helical transmembrane segment spans residues 121–141 (VYIFLNVFLIWLSILTITAIS). The Cytoplasmic portion of the chain corresponds to 142-162 (VERYFYIVHPMRYEVKMTINL). A helical membrane pass occupies residues 163–183 (VIGVMLLIWFKSLLLALVTLF). Topologically, residues 184 to 210 (GWPPYGHQSSIAASHCSLHASHSRLRG) are extracellular. The chain crosses the membrane as a helical span at residues 211 to 231 (VFAVLFCVICFLAPVVVIFSV). Over 232-293 (YSAVYKVARS…PERAFSGGKA (62 aa)) the chain is Cytoplasmic. Residues 294 to 314 (ALTLAFIVGQFLVCWLPFFIF) form a helical membrane-spanning segment. Residues 315–428 (HLQMSLTGSM…IPGQIPEEQA (114 aa)) are Extracellular-facing. The span at 398–414 (SETHPSFANSNPRNMEN) shows a compositional bias: polar residues. The segment at 398–428 (SETHPSFANSNPRNMENQAHKIPGQIPEEQA) is disordered.

This sequence belongs to the G-protein coupled receptor 1 family.

The protein localises to the cell membrane. This chain is Probable G-protein coupled receptor, found in Oryzias latipes (Japanese rice fish).